The primary structure comprises 693 residues: Elongation factor G (693 aa).

Positions 6–286 constitute a tr-type G domain; that stretch reads KYTRNIGIAA…AICRYLPSPI (281 aa). Residues 15 to 22, 83 to 87, and 137 to 140 contribute to the GTP site; these read AHIDAGKT, DTPGH, and NKMD.

It belongs to the TRAFAC class translation factor GTPase superfamily. Classic translation factor GTPase family. EF-G/EF-2 subfamily.

It localises to the cytoplasm. Catalyzes the GTP-dependent ribosomal translocation step during translation elongation. During this step, the ribosome changes from the pre-translocational (PRE) to the post-translocational (POST) state as the newly formed A-site-bound peptidyl-tRNA and P-site-bound deacylated tRNA move to the P and E sites, respectively. Catalyzes the coordinated movement of the two tRNA molecules, the mRNA and conformational changes in the ribosome. This is Elongation factor G from Karelsulcia muelleri (strain GWSS) (Sulcia muelleri).